The sequence spans 193 residues: Dual-action ribosomal maturation protein DarP (193 aa).

Residues 1–10 show a composition bias toward basic and acidic residues; sequence MRGRDEDTGE. Disordered regions lie at residues 1–20 and 171–193; these read MRGR…SQQR and QEQG…EDDE. A compositionally biased stretch (acidic residues) spans 181 to 193; the sequence is GLEDGESALEDDE.

It belongs to the DarP family.

It localises to the cytoplasm. Its function is as follows. Member of a network of 50S ribosomal subunit biogenesis factors which assembles along the 30S-50S interface, preventing incorrect 23S rRNA structures from forming. Promotes peptidyl transferase center (PTC) maturation. This is Dual-action ribosomal maturation protein DarP from Xanthomonas oryzae pv. oryzae (strain KACC10331 / KXO85).